The sequence spans 269 residues: Energy-coupling factor transporter transmembrane protein EcfT (269 aa).

6 helical membrane passes run 45 to 65 (RFFL…RVSL), 75 to 95 (VLWL…GEAI), 110 to 130 (MAAL…LLTL), 153 to 173 (FPAH…PTLL), 202 to 222 (FVPV…DLAL), and 244 to 264 (CLED…LLFL).

This sequence belongs to the energy-coupling factor EcfT family. As to quaternary structure, forms a stable energy-coupling factor (ECF) transporter complex composed of 2 membrane-embedded substrate-binding proteins (S component), 2 ATP-binding proteins (A component) and 2 transmembrane proteins (T component). May be able to interact with more than 1 S component at a time.

It is found in the cell membrane. Its function is as follows. Transmembrane (T) component of an energy-coupling factor (ECF) ABC-transporter complex. Unlike classic ABC transporters this ECF transporter provides the energy necessary to transport a number of different substrates. The sequence is that of Energy-coupling factor transporter transmembrane protein EcfT from Thermanaerovibrio acidaminovorans (strain ATCC 49978 / DSM 6589 / Su883) (Selenomonas acidaminovorans).